Consider the following 118-residue polypeptide: MKHLWFFLLLVAAPRWVLSQLQLQESGSGLVKPSQTLSLTCAVSGGSISSGGYSWSWIRQPPGKGLEWIGYIYHSGSTYYNPSLKSRVTISVDRSKNQFSLKLSSVTAADTAVYYCAR.

An N-terminal signal peptide occupies residues 1–19; the sequence is MKHLWFFLLLVAAPRWVLS. Positions 20–44 are framework-1; sequence QLQLQESGSGLVKPSQTLSLTCAVS. One can recognise an Ig-like domain in the interval 20-118; that stretch reads QLQLQESGSG…ADTAVYYCAR (99 aa). The cysteines at positions 41 and 116 are disulfide-linked. Positions 45 to 54 are complementarity-determining-1; the sequence is GGSISSGGYS. The segment at 55 to 71 is framework-2; it reads WSWIRQPPGKGLEWIGY. The tract at residues 72 to 78 is complementarity-determining-2; the sequence is IYHSGST. Positions 79 to 116 are framework-3; it reads YYNPSLKSRVTISVDRSKNQFSLKLSSVTAADTAVYYC. A complementarity-determining-3 region spans residues 117–118; sequence AR.

As to quaternary structure, immunoglobulins are composed of two identical heavy chains and two identical light chains; disulfide-linked.

Its subcellular location is the secreted. It localises to the cell membrane. In terms of biological role, v region of the variable domain of immunoglobulin heavy chains that participates in the antigen recognition. Immunoglobulins, also known as antibodies, are membrane-bound or secreted glycoproteins produced by B lymphocytes. In the recognition phase of humoral immunity, the membrane-bound immunoglobulins serve as receptors which, upon binding of a specific antigen, trigger the clonal expansion and differentiation of B lymphocytes into immunoglobulins-secreting plasma cells. Secreted immunoglobulins mediate the effector phase of humoral immunity, which results in the elimination of bound antigens. The antigen binding site is formed by the variable domain of one heavy chain, together with that of its associated light chain. Thus, each immunoglobulin has two antigen binding sites with remarkable affinity for a particular antigen. The variable domains are assembled by a process called V-(D)-J rearrangement and can then be subjected to somatic hypermutations which, after exposure to antigen and selection, allow affinity maturation for a particular antigen. The polypeptide is Immunoglobulin heavy variable 4-30-2 (Homo sapiens (Human)).